Reading from the N-terminus, the 315-residue chain is MTTYDPSQKSLGKEKLSRIPVKIEATHTPLRKPDWIRIRLSTDSKVSQLKKLLRENHLVTVCEEASCPNLNECFGHGTATFMIMGDKCTRRCSFCDVGHGRPDPLDPEEPVNLANTVSIMSLRYVVITSVDRDDLRDGGAQHYAQCINAVREKNPGIKVEVLVPDFRGRMEKALDQLAQGLPDVFNHNIETAPRLYKQARPGADYPWSLALLQTFKKRFPGIPTKSGMMLGLGETREEVETVMRDLRQHEVDRLTLGQYLQPTRYHMPVDRYVTPQEFQELGELAKKLGFSNVASGPLVRSSYHADLQAQGERVS.

[4Fe-4S] cluster contacts are provided by cysteine 62, cysteine 67, cysteine 73, cysteine 88, cysteine 92, cysteine 95, and serine 302. Residues 73–291 form the Radical SAM core domain; sequence CFGHGTATFM…GELAKKLGFS (219 aa).

This sequence belongs to the radical SAM superfamily. Lipoyl synthase family. [4Fe-4S] cluster is required as a cofactor.

The protein localises to the cytoplasm. It carries out the reaction [[Fe-S] cluster scaffold protein carrying a second [4Fe-4S](2+) cluster] + N(6)-octanoyl-L-lysyl-[protein] + 2 oxidized [2Fe-2S]-[ferredoxin] + 2 S-adenosyl-L-methionine + 4 H(+) = [[Fe-S] cluster scaffold protein] + N(6)-[(R)-dihydrolipoyl]-L-lysyl-[protein] + 4 Fe(3+) + 2 hydrogen sulfide + 2 5'-deoxyadenosine + 2 L-methionine + 2 reduced [2Fe-2S]-[ferredoxin]. Its pathway is protein modification; protein lipoylation via endogenous pathway; protein N(6)-(lipoyl)lysine from octanoyl-[acyl-carrier-protein]: step 2/2. Its function is as follows. Catalyzes the radical-mediated insertion of two sulfur atoms into the C-6 and C-8 positions of the octanoyl moiety bound to the lipoyl domains of lipoate-dependent enzymes, thereby converting the octanoylated domains into lipoylated derivatives. In Coxiella burnetii (strain Dugway 5J108-111), this protein is Lipoyl synthase.